The chain runs to 93 residues: Putative membrane protein insertion efficiency factor (93 aa).

The interval 72–93 is disordered; that stretch reads VPEHFPSWRGPHPKTPSRKTPE. Residues 82 to 93 show a composition bias toward basic residues; sequence PHPKTPSRKTPE.

The protein belongs to the UPF0161 family.

The protein localises to the cell membrane. Its function is as follows. Could be involved in insertion of integral membrane proteins into the membrane. The sequence is that of Putative membrane protein insertion efficiency factor from Deinococcus geothermalis (strain DSM 11300 / CIP 105573 / AG-3a).